Reading from the N-terminus, the 2752-residue chain is Protein PFF0380w (2752 aa).

Positions 20–30 (EREKEEEEKKR) are enriched in basic and acidic residues. 5 disordered regions span residues 20 to 44 (EREKEEEEKKRNYNISNNNNNNNYN), 139 to 160 (HIHKNNDINNIHEKNDKSNNDY), 634 to 678 (NDIV…INMK), 1048 to 1130 (DKKS…SGEN), and 1153 to 1172 (ENLQSDENHNNILYPYNNNG). Over residues 32–44 (YNISNNNNNNNYN) the composition is skewed to low complexity. The segment covering 142-157 (KNNDINNIHEKNDKSN) has biased composition (basic and acidic residues). Positions 640-674 (NNNNNNNNNNNNNNNNNNNNNNNNNNNNNNNNNNN) are enriched in low complexity. Basic and acidic residues predominate over residues 1048-1060 (DKKSEDMKEDTPT). A compositionally biased stretch (polar residues) spans 1061–1075 (RGENLQRGQNLQRGD). The segment covering 1076–1090 (NLQRGDNLQRGDNLQ) has biased composition (basic and acidic residues). Polar residues predominate over residues 1091-1130 (RGDNLQNGDNLQNGDNLQRGDNLQNGENLQSGENLQSGEN). Residues 1162–1172 (NNILYPYNNNG) are compositionally biased toward low complexity. In terms of domain architecture, HTH OST-type spans 1277 to 1354 (TLEEVLEIIS…LHRTHIQHKK (78 aa)). Disordered stretches follow at residues 1457–1499 (DIKQ…NNIS), 1958–1999 (AKNS…YYML), 2063–2099 (KRKNNNIHNYNDNNNDNNNDNNNDNNNDNNNDNNNDK), and 2501–2537 (DENNILNNNNDNNNNNNDKSNLVLHNNNDKSNHFLHN). Composition is skewed to low complexity over residues 1469–1499 (NNINSNNSNNSNSNSNSNNNNNNNYNSNNIS) and 1962–1975 (NQENINQNEINYNN). The span at 1976–1994 (NDDDDDNNNNNNDDDDDDN) shows a compositional bias: acidic residues. Composition is skewed to low complexity over residues 2068–2095 (NIHNYNDNNNDNNNDNNNDNNNDNNNDN) and 2501–2526 (DENNILNNNNDNNNNNNDKSNLVLHN).

This chain is Protein PFF0380w, found in Plasmodium falciparum (isolate 3D7).